The primary structure comprises 255 residues: Pyridoxine 5'-phosphate synthase (255 aa).

3-amino-2-oxopropyl phosphate is bound by residues Asn8 and Arg19. His44 acts as the Proton acceptor in catalysis. 1-deoxy-D-xylulose 5-phosphate contacts are provided by Arg46 and His51. The active-site Proton acceptor is Glu74. Position 111 (Thr111) interacts with 1-deoxy-D-xylulose 5-phosphate. The Proton donor role is filled by His202. Residues Asp203 and Gly225 to His226 contribute to the 3-amino-2-oxopropyl phosphate site.

Belongs to the PNP synthase family. In terms of assembly, homooctamer; tetramer of dimers.

The protein resides in the cytoplasm. It catalyses the reaction 3-amino-2-oxopropyl phosphate + 1-deoxy-D-xylulose 5-phosphate = pyridoxine 5'-phosphate + phosphate + 2 H2O + H(+). The protein operates within cofactor biosynthesis; pyridoxine 5'-phosphate biosynthesis; pyridoxine 5'-phosphate from D-erythrose 4-phosphate: step 5/5. Catalyzes the complicated ring closure reaction between the two acyclic compounds 1-deoxy-D-xylulose-5-phosphate (DXP) and 3-amino-2-oxopropyl phosphate (1-amino-acetone-3-phosphate or AAP) to form pyridoxine 5'-phosphate (PNP) and inorganic phosphate. This chain is Pyridoxine 5'-phosphate synthase, found in Xanthomonas oryzae pv. oryzae (strain PXO99A).